A 2021-amino-acid chain; its full sequence is MSGRQRTLFQTWGPSLVRGSGDSGCGQPRSPAMAEALPEEDDEVLLVAAYEAERQLDPGDGGFCAAAGALWIYPTNCPVRDYQLDISRSALFCNTLVCLPTGLGKTFIAAVVMYNFYRWFPSGKVVFMAPTKPLVTQQMEACFHVMGIPQSHMAEMTGSTQAVNRKEIWSSRRVLFLTPQVMVNDLTRGAVPATHVKCLVVDEAHKALGNYAYCQVVRELVKYTTHFRILALSATPGSDIKAVQQVITNLLIGKIELRSEESPDILPYSHERRVEKLVVPLGEELGAIQKTYIQILETFASSLIHRNVLMKRDIPNLTKYQIILARDQFRKNPSPNIVGIQQGIIEGEFALCISLYHGYELLQQMGMRSLYFFLSGIMDGTKGMTRARNELSRNEDFMKLYTHLQSAFAPASTSDASAFQRGNKEKKFVYSHPKLKKLEEVILEHFKSWNAKATTEKKCHESRVMIFSSFRDSVEEIAEMLLQHRPVIRVMTFVGHASGKNTKGFTQKEQLQVVRQFRDGGYNTLVSTCVGEEGLDIGEVDLIICFDAQKSPIRLIQRMGRTGRKRQGRIVVILAEGREERTYNQSQSNKKNIYKAISGNRQVLRLYQGSPRMVPDKINPELHKMYITHGVYEPEKARSVQRRPFSSRGGIKASKSNKDGLLSEEEFNLWSRLYRLGDSDQVKGVALPQSHFPSLQEDRVIQDPTTRIHQLSLSEWSLWQDRPLPTHQVDHSDRCHHFISIMKMIEGMRHEEGECSYELKIRPFLQMEDVCSKYHAPRNGYNNVASVASSAHQKSSFRPSVDAGGSLTVIESEEEHADTVKQRDSKWTKITSLREKPCRAGRKGQTCEHSEGEGEDGDAGSSDADGQSPAEADSQVDPPSGERMADVGGISILGAVTEEDNHPGTLQMECQVTNKSCARYSLDSGYSSFSDEKSVSSNLFLPLEEELFTDRAAEQFYNCRPMTEDVLANVERFLSRSPPSLSGLSDLVYDVTQGCEFDNASCSPYPEHEHSPRPVSPASHSAGNSQQNLESNSAKRISHPTEKYCLPGTTHNKVSDRPSFCESDSEGHNIKYQNSGSNSCAQIQADLENNFVDKNSHDDSEPPVLFTDEDESLLLFEDDFKNIEDGPEELNGASLPPFNSISQPLRVSGKTLTSEMPPVSHFLISDELLLDDDSEPEDQIVCGAKSWKCQEGVEDGQEELRTDGQTFDCSVDLFSVTFDLGFRCSSGSDDEMLAGASDRTRTLGAADVSGRHSDKEIKDAGGASGPLGRAISPIPTETAQWSPWAQNKEYASFHVASSSPVKQRVRSTPLSKSHASSKTGAHMLKTLDSTKEKAGGQGFKMALNPRLGHLGFSVEETKSSDQVFVHQSPRRTEVEHLTSESEDDVFLRKTKKPKRNVLKSPEDQKNNEVDSPIHAVKKPRVLRSELASSDDESENFGRTCPRLEHFKGRNRNIRKGSAAQKNRSQVKTMARRFLDDEAEVSGEDVDCVSADEEDESENEQDSSLLDFVNDRTQLSQAINDSEMRAIYMKSVRSPLMSTKYRMVREKRPNMNIFSQIPEQDENYLEDSFCVDEEESCKSQSSEEEISVDFNLTKDSFTDEDIRYKTRYAVKIKQMNKKQNYTRPRKKLSRIILPDDDSSEEENIPKDREHSVAGGHAAAEHTQQGQLWASGPSGSSVPPQVLSDPSWNQSSRQRLQVQPSITDAVPRTLNVKAQSHNKIKSASPPCTGVESRKEYGNHPVQLKADSQEHSDTSAAPCSTSLLHVAEGHTAPRHLQEGNRACILVDSREITTGLEVISSLRTVHGLQVEICPLNGCDYIVSSRMVVVRRSQSEMLSNTSKNKFIEQMQRLQSMFQRICVIVEKDREKAGDTSKKFRRTKCYDSLLTALVGAGIRILFSSGQEETADLLKELSLVEQRKNAGIHIPAVLNTSKLEALPFYLSIPGISYITALNMCHQFSSVKKMANSSPEEISTCAQVNHQKAEEIYKYIHYIFDMQMLPNDLNQERQKPDTCLTLGVAMKELS.

Ser30 is subject to Phosphoserine. Residues 86–254 form the Helicase ATP-binding domain; the sequence is ISRSALFCNT…QVITNLLIGK (169 aa). 99-106 contributes to the ATP binding site; the sequence is LPTGLGKT. Residues 202-205 carry the DEAH box motif; the sequence is DEAH. In terms of domain architecture, Helicase C-terminal spans 437–612; it reads KLEEVILEHF…VLRLYQGSPR (176 aa). Disordered regions lie at residues 638 to 657, 837 to 886, 1002 to 1049, 1244 to 1273, 1296 to 1319, 1369 to 1441, 1447 to 1466, 1615 to 1700, and 1712 to 1732; these read RSVQ…SKSN, PCRA…RMAD, CSPY…LPGT, GAAD…AISP, ASSS…SSKT, PRRT…RTCP, KGRN…RSQV, NKKQ…QPSI, and AQSH…ESRK. Over residues 1018 to 1035 the composition is skewed to polar residues; it reads ASHSAGNSQQNLESNSAK. The span at 1249-1259 shows a compositional bias: basic and acidic residues; it reads SGRHSDKEIKD. Basic and acidic residues predominate over residues 1370–1379; it reads RRTEVEHLTS. A compositionally biased stretch (basic residues) spans 1388–1397; sequence RKTKKPKRNV. A Phosphoserine modification is found at Ser1637. A compositionally biased stretch (low complexity) spans 1669–1682; the sequence is SGPSGSSVPPQVLS. A compositionally biased stretch (polar residues) spans 1684 to 1700; the sequence is PSWNQSSRQRLQVQPSI. Positions 1689–2009 are interaction with FAAP24; the sequence is SSRQRLQVQP…LNQERQKPDT (321 aa).

This sequence belongs to the DEAD box helicase family. DEAH subfamily. FANCM sub-subfamily. Component of the Fanconi anemia (FA) core complex, which consists of CENPS, CENPX, FANCA, FANCB, FANCC, FANCE, FANCF, FANCG, FANCL, FANCM, FAAP24 and FAAP100. The FA core complex associates with Bloom syndrome (BLM) complex, which consists of at least BLM, DNA topoisomerase 3-alpha/TOP3A, RMI1/BLAP75, RPA1/RPA70 and RPA2/RPA32. This supercomplex between FA and BLM complexes has been called BRAFT. Forms a discrete complex with CENPS and CENPX, called FANCM-MHF; this interaction stimulates DNA binding and replication fork remodeling by FANCM and stabilizes the binding partners. Forms a heterodimer with FAAP24; this interaction increases FANCM single-stranded DNA-binding activity. Post-translationally, phosphorylated; hyperphosphorylated in response to genotoxic stress.

It is found in the nucleus. It carries out the reaction ATP + H2O = ADP + phosphate + H(+). In terms of biological role, DNA-dependent ATPase component of the Fanconi anemia (FA) core complex. Required for the normal activation of the FA pathway, leading to monoubiquitination of the FANCI-FANCD2 complex in response to DNA damage, cellular resistance to DNA cross-linking drugs, and prevention of chromosomal breakage. In complex with CENPS and CENPX, binds double-stranded DNA (dsDNA), fork-structured DNA (fsDNA) and Holliday junction substrates. Its ATP-dependent DNA branch migration activity can process branched DNA structures such as a movable replication fork. This activity is strongly stimulated in the presence of CENPS and CENPX. In complex with FAAP24, efficiently binds to single-strand DNA (ssDNA), splayed-arm DNA, and 3'-flap substrates. In vitro, on its own, strongly binds ssDNA oligomers and weakly fsDNA, but does not bind to dsDNA. In Mus musculus (Mouse), this protein is Fanconi anemia group M protein homolog (Fancm).